The chain runs to 301 residues: tRNA pseudouridine synthase B (301 aa).

Catalysis depends on Asp47, which acts as the Nucleophile.

The protein belongs to the pseudouridine synthase TruB family. Type 1 subfamily.

It catalyses the reaction uridine(55) in tRNA = pseudouridine(55) in tRNA. Responsible for synthesis of pseudouridine from uracil-55 in the psi GC loop of transfer RNAs. The sequence is that of tRNA pseudouridine synthase B from Cereibacter sphaeroides (strain ATCC 17025 / ATH 2.4.3) (Rhodobacter sphaeroides).